Here is a 243-residue protein sequence, read N- to C-terminus: UPF0246 protein MGAS10750_Spy1880 (243 aa).

This sequence belongs to the UPF0246 family.

In Streptococcus pyogenes serotype M4 (strain MGAS10750), this protein is UPF0246 protein MGAS10750_Spy1880.